We begin with the raw amino-acid sequence, 337 residues long: MPKINRPRRGSLAFSPRKRAQSPIPKYKSWPEHSGAPALLGFAGYKVGMTHVLMVDDHKDSPTEGKEIMVPVTIIEIPTMKVAALRVYTKDTYGKHALTEIWAEPLDSQLSRRVTSPKNYDSTAAKKKYSDALAAGLVAEIYALAYTQPATMSGVPKKVPDLMEIKVAGGDIAKQYEYAFGLLGKEIRLSNVIETGAYADITAITIGKGTQGPVKRWGVTLRKRKHSVGGKERHVGTLGPWNPHHVRWEVPQSGQMGYQQRTEFNKRILKIGENGAEITPAGGFLNYGVIRNAYVVIKGSIPGPAKRLIRIRPAIRQGEHVVRSPAIQFVSVQSKQG.

Residues 1 to 29 form a disordered region; it reads MPKINRPRRGSLAFSPRKRAQSPIPKYKS.

It belongs to the universal ribosomal protein uL3 family. Part of the 50S ribosomal subunit. Forms a cluster with proteins L14 and L24e.

Its function is as follows. One of the primary rRNA binding proteins, it binds directly near the 3'-end of the 23S rRNA, where it nucleates assembly of the 50S subunit. This is Large ribosomal subunit protein uL3 from Methanoregula boonei (strain DSM 21154 / JCM 14090 / 6A8).